Consider the following 585-residue polypeptide: Amyloid protein-binding protein 2 (585 aa).

8 TPR repeats span residues 50–83 (QGRLCQLGSEFCELEVFAKVLRALDKRHLLHHCF), 120–153 (IQVGFVLGGFLSDAGWYSDAEKVFLSCLQLCTLH), 206–239 (AALYGELCALLFAKSHYDEAYKWCVEAMKEITAG), 288–321 (SDTLLDYGFYLLNVDNICQSVAIYQAALDIRQSV), 333–367 (HEDLAYSSYVHQYSSGKFDNALFHAERAIGIITHI), 429–462 (AKHYGNLGRLYQSMRKFKEAEEMHIKAIQIKEQL), 471–505 (ALSVGHLASLYNYDMNQYENAEKLYLRSIAIGKKL), and 514–547 (EYDYRGLIKLYNSIGNYEKVFEYHNVLSNWNRLR).

Component of a CRL2 E3 ubiquitin-protein ligase complex, also named ECS (Elongin BC-CUL2/5-SOCS-box protein) complex, composed of CUL2, Elongin BC (ELOB and ELOC), RBX1 and substrate-specific adapter APPBP2. Interacts with APP; APP interaction inhibits the E3 ubiquitin-protein ligase activity of the CRL2(APPBP2) complex. In terms of processing, rapidly degraded by the proteasome upon overexpression of a C-terminal fragment of APP.

The protein localises to the nucleus. It localises to the cytoplasm. The protein resides in the cytoskeleton. Its subcellular location is the membrane. It functions in the pathway protein modification; protein ubiquitination. E3 ubiquitin-protein ligase activity of the CRL2(APPBP2) complex is inhibited by APP. Functionally, substrate-recognition component of a Cul2-RING (CRL2) E3 ubiquitin-protein ligase complex of the DesCEND (destruction via C-end degrons) pathway, which recognizes a C-degron located at the extreme C terminus of target proteins, leading to their ubiquitination and degradation. The C-degron recognized by the DesCEND pathway is usually a motif of less than ten residues and can be present in full-length proteins, truncated proteins or proteolytically cleaved forms. The CRL2(APPBP2) complex specifically recognizes proteins with a -Arg-Xaa-Xaa-Gly degron at the C-terminus, leading to their ubiquitination and degradation. The CRL2(APPBP2) complex mediates ubiquitination and degradation of truncated SELENOV selenoproteins produced by failed UGA/Sec decoding, which end with a -Arg-Xaa-Xaa-Gly degron. May play a role in intracellular protein transport: may be involved in the translocation of APP along microtubules toward the cell surface. In Mus musculus (Mouse), this protein is Amyloid protein-binding protein 2.